The following is a 420-amino-acid chain: Probable ABC transporter-binding protein DR_1438 (420 aa).

The N-terminal stretch at 1-24 (MKKFAAVLGLTVAFAAASQAHAVT) is a signal peptide.

The protein belongs to the bacterial solute-binding protein 1 family.

Functionally, probably part of a binding-protein-dependent transport system. The protein is Probable ABC transporter-binding protein DR_1438 of Deinococcus radiodurans (strain ATCC 13939 / DSM 20539 / JCM 16871 / CCUG 27074 / LMG 4051 / NBRC 15346 / NCIMB 9279 / VKM B-1422 / R1).